The sequence spans 267 residues: Elsinochrome reductase 1 (267 aa).

NADP(+)-binding residues include Ile26, Asp72, Asn99, and Arg132. Ser149 acts as the Proton donor in catalysis. 4 residues coordinate NADP(+): Tyr163, Lys167, Ile196, and Thr198. Tyr163 acts as the Proton acceptor in catalysis. Residue Lys167 is the Lowers pKa of active site Tyr of the active site.

The protein belongs to the short-chain dehydrogenases/reductases (SDR) family.

Reductase; part of the gene cluster that mediates the biosynthesis of elsinochromes, pigments consisting of at least four interconvertible tautomers (A, B, C and D) that have a core phenolic quinone to which various side chains are attached and which play an important role in fungal pathogenesis. The non-reducing polyketide synthase PKS1 was proposed to iteratively catalyze decarboxylation between acetyl-CoA and malonyl-CoA subunits for polyketide chain elongation. The released polyketide undergoes cyclization to form an aromatic ring, and proceeds via serial modification steps to produce the heptaketide back- bone of elsinochrome. As elsinochrome has a symmetrical structure, two identical heptaketides are fused to form a core 1,2-dihydrobenzo-perylene ring structure, which can then be successively modified to produce the various derivatives of elsinochrome. Some of these reactions may be cooperatively carried out, at least in part, by the products of RDT1, OXR1 and PKS1. PRF1, embedded within the elsinochrome cluster possibly functions to stabilize some of the biosynthetic enzymes required for elsinochrome production. As prefoldin is a hexamer containing 2 a and 4 b subunits, additional prefoldin subunits, whose coding genes may not immediately link to the elsinochrome biosynthetic gene cluster, are required to fulfill the chaperone function. In addition, no methyltransferase-coding gene exists within the biosynthetic gene cluster, even though elsinochrome has four methyl groups at positions C3, C7, C8 and C12. Apparently, the identified gene cluster does not contain the entire entourage of genes responsible for elsinochrome biosynthesis. Once elsinochrome is synthesized, it must be exported outside the fungal cells, which is probably accomplished by the ECT1 transporter, to avoid toxicity. This is Elsinochrome reductase 1 from Elsinoe fawcettii (Citrus scab fungus).